The sequence spans 159 residues: Transcription antitermination protein NusB (159 aa).

Residues 1-20 form a disordered region; the sequence is MNKNTQGKPSGKPVRRDGVD.

This sequence belongs to the NusB family.

In terms of biological role, involved in transcription antitermination. Required for transcription of ribosomal RNA (rRNA) genes. Binds specifically to the boxA antiterminator sequence of the ribosomal RNA (rrn) operons. This chain is Transcription antitermination protein NusB, found in Stenotrophomonas maltophilia (strain R551-3).